The following is a 72-amino-acid chain: Translation initiation factor IF-1 (72 aa).

The S1-like domain occupies 2–72 (AKEDCIEMQG…SKGRIIFRSR (71 aa)).

This sequence belongs to the IF-1 family. In terms of assembly, component of the 30S ribosomal translation pre-initiation complex which assembles on the 30S ribosome in the order IF-2 and IF-3, IF-1 and N-formylmethionyl-tRNA(fMet); mRNA recruitment can occur at any time during PIC assembly.

It localises to the cytoplasm. Functionally, one of the essential components for the initiation of protein synthesis. Stabilizes the binding of IF-2 and IF-3 on the 30S subunit to which N-formylmethionyl-tRNA(fMet) subsequently binds. Helps modulate mRNA selection, yielding the 30S pre-initiation complex (PIC). Upon addition of the 50S ribosomal subunit IF-1, IF-2 and IF-3 are released leaving the mature 70S translation initiation complex. The sequence is that of Translation initiation factor IF-1 from Haemophilus influenzae (strain ATCC 51907 / DSM 11121 / KW20 / Rd).